A 506-amino-acid polypeptide reads, in one-letter code: Chaperone SurA (506 aa).

The N-terminal stretch at 1 to 29 is a signal peptide; that stretch reads MMRRLHSSRRFSGSLLALALGLALPLAHA. PpiC domains follow at residues 219–320 and 351–450; these read PVML…KVLQ and VTQT…QVLE.

It is found in the periplasm. It catalyses the reaction [protein]-peptidylproline (omega=180) = [protein]-peptidylproline (omega=0). In terms of biological role, chaperone involved in the correct folding and assembly of outer membrane proteins. Recognizes specific patterns of aromatic residues and the orientation of their side chains, which are found more frequently in integral outer membrane proteins. May act in both early periplasmic and late outer membrane-associated steps of protein maturation. This chain is Chaperone SurA, found in Bordetella avium (strain 197N).